A 1461-amino-acid polypeptide reads, in one-letter code: Neogenin (1461 aa).

A signal peptide spans 1-33 (MAAERGARRLLSTPSFWLYCLLLLGRRAPGAAA). The Extracellular portion of the chain corresponds to 34–1105 (ARSGSAPQSP…PTSPLDSNML (1072 aa)). Ig-like C2-type domains follow at residues 52 to 141 (PFYF…TIIS), 152 to 238 (PRFT…VELK), 243 to 336 (PEVI…AELT), and 341 to 426 (PEFL…AQLI). N73 carries N-linked (GlcNAc...) asparagine glycosylation. 3 disulfides stabilise this stretch: C74–C129, C173–C221, and C270–C320. An N-linked (GlcNAc...) asparagine glycan is attached at N210. The N-linked (GlcNAc...) asparagine glycan is linked to N326. C362 and C410 form a disulfide bridge. Fibronectin type-III domains are found at residues 441 to 535 (APRD…TQPE), 541 to 631 (PAPN…TLSD), 636 to 731 (APQN…TFES), 741 to 831 (VPSS…RPHT), 856 to 952 (PPVG…TFEL), and 957 to 1054 (PPKD…TPKA). N-linked (GlcNAc...) asparagine glycosylation is found at N470 and N489. Residues N639 and N715 are each glycosylated (N-linked (GlcNAc...) asparagine). N909 carries an N-linked (GlcNAc...) asparagine glycan. A disordered region spans residues 1041 to 1097 (GPMSEAVQFRTPKADSSDKMPNDQASGSGGKGSRLPDLGSDYKPPMSGSNSPHGSPT). The segment covering 1052 to 1061 (PKADSSDKMP) has biased composition (basic and acidic residues). The segment covering 1087 to 1097 (SGSNSPHGSPT) has biased composition (polar residues). Residues 1106-1126 (LVIIVSVGVITIVVVVIIAVF) traverse the membrane as a helical segment. The Cytoplasmic segment spans residues 1127–1461 (CTRRTTSHQK…MKDLNAITTA (335 aa)). Disordered regions lie at residues 1138-1160 (KRAA…DVKP), 1174-1206 (PIDK…SMDS), 1235-1276 (PKMM…PARS), and 1289-1381 (TSMS…ALPS). Phosphoserine is present on residues S1178 and S1194. A compositionally biased stretch (polar residues) spans 1191–1206 (PRNSQDITPVDNSMDS). Position 1198 is a phosphothreonine (T1198). Polar residues-rich tracts occupy residues 1289–1322 (TSMS…TCCT) and 1330–1349 (ATSS…QSLP). The span at 1366-1375 (AIPPPGPPTY) shows a compositional bias: pro residues. The residue at position 1401 (S1401) is a Phosphoserine. The residue at position 1404 (T1404) is a Phosphothreonine. S1432, S1434, and S1435 each carry phosphoserine.

Belongs to the immunoglobulin superfamily. DCC family. In terms of assembly, interacts with MYO10. Interacts with RGMA and RGMB. Interacts with BMP2, BMP4, BMP6, and BMP7. Widely expressed and also in cancer cell lines.

The protein localises to the cell membrane. Functionally, multi-functional cell surface receptor regulating cell adhesion in many diverse developmental processes, including neural tube and mammary gland formation, myogenesis and angiogenesis. Receptor for members of the BMP, netrin, and repulsive guidance molecule (RGM) families. Netrin-Neogenin interactions result in a chemoattractive axon guidance response and cell-cell adhesion, the interaction between NEO1/Neogenin and RGMa and RGMb induces a chemorepulsive response. This is Neogenin (NEO1) from Homo sapiens (Human).